The chain runs to 866 residues: Scm-like with four MBT domains protein 1 (866 aa).

4 MBT repeats span residues 20 to 120 (LSWE…LEAP), 128 to 232 (SDWD…LQPP), 242 to 348 (AEWQ…ISPP), and 356 to 453 (FDWA…LSTP). An antigenic epitope region spans residues 34–42 (VPYGSFKHV). The interval 641–777 (KKKNKRIGRP…DDENKPPSPK (137 aa)) is disordered. The segment covering 663–682 (KASKRRKRRKNVFVHKKKRS) has biased composition (basic residues). Over residues 683-694 (SASVDNTPAGSP) the composition is skewed to polar residues. Composition is skewed to acidic residues over residues 699 to 713 (GEDE…DDSL) and 721 to 730 (QQDELQEESE). Low complexity predominate over residues 737–749 (CSSSPTQSEISTS). Serine 767 and serine 775 each carry phosphoserine. The 69-residue stretch at 796-864 (WSVADVVRFI…RIKFAFYEQF (69 aa)) folds into the SAM domain.

Interacts with MYOD1. Component of the SLC (SFMBT1-LSD1-CoREST) corepressor complex, which also contains KDM1A/LSD1 and RCOR1/CoREST. Interacts with KDM1A/LSD1 and RCOR1/CoREST. Interacts with L3MBTL3. In terms of tissue distribution, expressed in all cell lines and normal tissues tested, including the thymus.

It is found in the nucleus. Its function is as follows. Histone-binding protein, which is part of various corepressor complexes. Mediates the recruitment of corepressor complexes to target genes, followed by chromatin compaction and repression of transcription. Plays a role during myogenesis: required for the maintenance of undifferentiated states of myogenic progenitor cells via interaction with MYOD1. Interaction with MYOD1 leads to the recruitment of associated corepressors and silencing of MYOD1 target genes. Part of the SLC complex in germ cells, where it may play a role during spermatogenesis. The polypeptide is Scm-like with four MBT domains protein 1 (SFMBT1) (Homo sapiens (Human)).